Here is a 451-residue protein sequence, read N- to C-terminus: LisH domain-containing protein C1711.05 (451 aa).

The 33-residue stretch at 6–38 (MKSKVCPLIYHFLQENGYVKTAQTFLKETGDKD) folds into the LisH domain. Residues 59–394 (PYLTTEDVGK…VGDPSQWDFA (336 aa)) form a disordered region. The segment covering 73–98 (KESLEKSNDDSQKISKKGAPPEKAHS) has biased composition (basic and acidic residues). Positions 99–120 (SSEASGSGSSSDESDSSSSESE) are enriched in low complexity. The span at 135–145 (SESESSSEDSD) shows a compositional bias: acidic residues. Positions 146-174 (SSSSSSDSESESSSEGSDSSSSSSSSESE) are enriched in low complexity. Residues 189–199 (SESESSSEDSD) show a composition bias toward acidic residues. Residues 200–228 (SSSSSSDSESESSSEGSDSSSSSSSSESE) show a composition bias toward low complexity. Acidic residues-rich tracts occupy residues 243-253 (SESESSSEDSD) and 278-300 (DSEDDSSSDSSDSESESSSEDSD). Residues 301–319 (STSSSSDSDSSSSSEDGNS) show a composition bias toward low complexity. Residues 320 to 332 (NTDTTTSGEVSAQ) are compositionally biased toward polar residues. Over residues 333-343 (SSTNSTSSEES) the composition is skewed to low complexity. The span at 344-365 (TSVKDEDSSKIHDKSLKRKHED) shows a compositional bias: basic and acidic residues. A compositionally biased stretch (low complexity) spans 369-380 (STSTKSSRTTKT).

It localises to the nucleus. Its subcellular location is the nucleolus. This is LisH domain-containing protein C1711.05 from Schizosaccharomyces pombe (strain 972 / ATCC 24843) (Fission yeast).